The following is an 85-amino-acid chain: Phosphocarrier protein HPr (85 aa).

The region spanning 1–85 (MFQQEVTITA…HLVKLMAELE (85 aa)) is the HPr domain. The active-site Pros-phosphohistidine intermediate is His-15.

It is found in the cytoplasm. In terms of biological role, general (non sugar-specific) component of the phosphoenolpyruvate-dependent sugar phosphotransferase system (sugar PTS). This major carbohydrate active-transport system catalyzes the phosphorylation of incoming sugar substrates concomitantly with their translocation across the cell membrane. The phosphoryl group from phosphoenolpyruvate (PEP) is transferred to the phosphoryl carrier protein HPr by enzyme I. Phospho-HPr then transfers it to the PTS EIIA domain. This Klebsiella pneumoniae protein is Phosphocarrier protein HPr (ptsH).